The sequence spans 382 residues: MDNLFTFLHEIEDRYARTIFNFHLISCDEIGDIYGLMKERISSEDMFDNIVYNKDIHHAIKKLVYCDIQLTKHIINQNTYPVFNDSSQVKCCHYFDINSDNSNISSRTVEIFEREKSSLVSYIKTTNKKRKVNYGEIKKTVHGGTNANYFSGKKSDEYLSTTVRSNINQPWIKTISKRMRVDIINHSIVTRGKSSILQTIEIIFTNRTCVKIFKDSTMHIILSKDKDEKGCIHMIDKLFYVYYNLFLLFEDIIQNEYFKEVANVVNHVLTATALDEKLFLIKKMAEHDVYGVSNFKIGMFNLTFIKSLDHTVFPSLLDEDSKIKFFKGKKLNIVALRSLEDCINYVTKSENMIEMMKERSTILNSIDIETESVDRLKELLLK.

It belongs to the poxviruses A23 family. Heterodimer of a 45 kDa and a 32 kDa subunit.

Acts with RNA polymerase to initiate transcription from intermediate gene promoters. The polypeptide is Intermediate transcription factor 3 large subunit (VITF3L) (Oryctolagus cuniculus (Rabbit)).